A 90-amino-acid chain; its full sequence is RNA-binding protein Hfq (90 aa).

Residues 9 to 69 (DRFLNHLRVN…ISTIIPSSYV (61 aa)) enclose the Sm domain.

This sequence belongs to the Hfq family. Homohexamer.

Its function is as follows. RNA chaperone that binds small regulatory RNA (sRNAs) and mRNAs to facilitate mRNA translational regulation in response to envelope stress, environmental stress and changes in metabolite concentrations. Also binds with high specificity to tRNAs. This Thermotoga petrophila (strain ATCC BAA-488 / DSM 13995 / JCM 10881 / RKU-1) protein is RNA-binding protein Hfq.